The primary structure comprises 297 residues: tRNA dimethylallyltransferase (297 aa).

An ATP-binding site is contributed by 8 to 15; it reads GATASGKS. 10-15 lines the substrate pocket; sequence TASGKS. The tract at residues 33 to 36 is interaction with substrate tRNA; that stretch reads DSLS.

It belongs to the IPP transferase family. Monomer. The cofactor is Mg(2+).

The catalysed reaction is adenosine(37) in tRNA + dimethylallyl diphosphate = N(6)-dimethylallyladenosine(37) in tRNA + diphosphate. Catalyzes the transfer of a dimethylallyl group onto the adenine at position 37 in tRNAs that read codons beginning with uridine, leading to the formation of N6-(dimethylallyl)adenosine (i(6)A). This chain is tRNA dimethylallyltransferase, found in Sulfurimonas denitrificans (strain ATCC 33889 / DSM 1251) (Thiomicrospira denitrificans (strain ATCC 33889 / DSM 1251)).